The sequence spans 272 residues: ATP synthase subunit delta (272 aa).

This sequence belongs to the ATPase delta chain family. In terms of assembly, F-type ATPases have 2 components, F(1) - the catalytic core - and F(0) - the membrane proton channel. F(1) has five subunits: alpha(3), beta(3), gamma(1), delta(1), epsilon(1). F(0) has three main subunits: a(1), b(2) and c(10-14). The alpha and beta chains form an alternating ring which encloses part of the gamma chain. F(1) is attached to F(0) by a central stalk formed by the gamma and epsilon chains, while a peripheral stalk is formed by the delta and b chains.

The protein resides in the cell membrane. Functionally, f(1)F(0) ATP synthase produces ATP from ADP in the presence of a proton or sodium gradient. F-type ATPases consist of two structural domains, F(1) containing the extramembraneous catalytic core and F(0) containing the membrane proton channel, linked together by a central stalk and a peripheral stalk. During catalysis, ATP synthesis in the catalytic domain of F(1) is coupled via a rotary mechanism of the central stalk subunits to proton translocation. Its function is as follows. This protein is part of the stalk that links CF(0) to CF(1). It either transmits conformational changes from CF(0) to CF(1) or is implicated in proton conduction. This Corynebacterium jeikeium (strain K411) protein is ATP synthase subunit delta.